A 421-amino-acid chain; its full sequence is PDZ and LIM domain protein 7 (421 aa).

Residues 1–85 (MEEYKVTLDG…KLGLVLSRFA (85 aa)) enclose the PDZ domain. The segment at 115 to 193 (IARPFGSGTP…STGPAVRPPW (79 aa)) is disordered. Residues 147–172 (YPSSQMPQGQLQNGQKSRTVSNVSGK) are compositionally biased toward polar residues. LIM zinc-binding domains lie at 244-302 (PVCS…ARFA), 303-362 (PNCA…MFGT), and 363-421 (KCRG…FSNV).

Its subcellular location is the cytoplasm. The protein resides in the cytoskeleton. In terms of biological role, may function as a scaffold on which the coordinated assembly of proteins can occur. May play a role as an adapter that, via its PDZ domain, localizes LIM-binding proteins to actin filaments of both skeletal muscle and nonmuscle tissues. The protein is PDZ and LIM domain protein 7 (pdlim7) of Xenopus laevis (African clawed frog).